The sequence spans 377 residues: Pseudouridylate synthase RPUSD4, mitochondrial (377 aa).

The N-terminal 46 residues, 1–46 (MAAPCLRTPGVQLLSMSSRPGRLFTPGSWSFCSSATSSRPLNAQRL), are a transit peptide targeting the mitochondrion. D153 is a catalytic residue.

This sequence belongs to the pseudouridine synthase RluA family. In terms of assembly, interacts with 16S mt-rRNA, mt-tRNA(Phe) and mt-tRNA(Met). Forms a regulatory protein-RNA complex, consisting of RCC1L, NGRN, RPUSD3, RPUSD4, TRUB2, FASTKD2 and 16S mt-rRNA.

It localises to the mitochondrion matrix. Its subcellular location is the nucleus. The protein localises to the cytoplasm. It carries out the reaction uridine in 5S rRNA = pseudouridine in 5S rRNA. The catalysed reaction is a uridine in tRNA = a pseudouridine in tRNA. The enzyme catalyses a uridine in mRNA = a pseudouridine in mRNA. In terms of biological role, catalyzes uridine to pseudouridine isomerization (pseudouridylation) of different mitochondrial RNA substrates. Acts on position 1397 in 16S mitochondrial ribosomal RNA (16S mt-rRNA). This modification is required for the assembly of 16S mt-rRNA into a functional mitochondrial ribosome. As a component of a functional protein-RNA module, consisting of RCC1L, NGRN, RPUSD3, RPUSD4, TRUB2, FASTKD2 and 16S mt-rRNA, controls 16S mt-rRNA abundance and is required for intra-mitochondrial translation. Acts on position 39 in mitochondrial tRNA(Phe). Also catalyzes pseudouridylation of mRNAs in nucleus: acts as a regulator of pre-mRNA splicing by mediating pseudouridylation of pre-mRNAs at locations associated with alternatively spliced regions. Pseudouridylation of pre-mRNAs near splice sites directly regulates mRNA splicing and mRNA 3'-end processing. The polypeptide is Pseudouridylate synthase RPUSD4, mitochondrial (Mus musculus (Mouse)).